Consider the following 386-residue polypeptide: Cell division protein FtsZ (386 aa).

GTP contacts are provided by residues 20–24 (GGGGN), 107–109 (GTG), glutamate 138, arginine 142, and asparagine 186. The segment at 350-377 (LNQEQKTAAKAVNEQNAQGSKEPDYLDI) is disordered.

Belongs to the FtsZ family. Homodimer. Polymerizes to form a dynamic ring structure in a strictly GTP-dependent manner. Interacts directly with several other division proteins.

The protein resides in the cytoplasm. Its function is as follows. Essential cell division protein that forms a contractile ring structure (Z ring) at the future cell division site. The regulation of the ring assembly controls the timing and the location of cell division. One of the functions of the FtsZ ring is to recruit other cell division proteins to the septum to produce a new cell wall between the dividing cells. Binds GTP and shows GTPase activity. The sequence is that of Cell division protein FtsZ from Sodalis glossinidius.